The following is a 112-amino-acid chain: Histone H2B (112 aa).

The tract at residues 1-24 is disordered; that stretch reads MATPKSSSANRKKGGKKSHRKPKR. Over residues 10–24 the composition is skewed to basic residues; the sequence is NRKKGGKKSHRKPKR.

It belongs to the histone H2B family. The nucleosome is a histone octamer containing two molecules each of H2A, H2B, H3 and H4 assembled in one H3-H4 heterotetramer and two H2A-H2B heterodimers. The octamer wraps approximately 147 bp of DNA.

Its subcellular location is the nucleus. The protein localises to the chromosome. Its function is as follows. Core component of nucleosome. Nucleosomes wrap and compact DNA into chromatin, limiting DNA accessibility to the cellular machineries which require DNA as a template. Histones thereby play a central role in transcription regulation, DNA repair, DNA replication and chromosomal stability. DNA accessibility is regulated via a complex set of post-translational modifications of histones, also called histone code, and nucleosome remodeling. This chain is Histone H2B, found in Trypanosoma cruzi.